Here is a 31-residue protein sequence, read N- to C-terminus: Photosystem II reaction center protein T (31 aa).

Residues serine 3–leucine 23 form a helical membrane-spanning segment.

This sequence belongs to the PsbT family. PSII is composed of 1 copy each of membrane proteins PsbA, PsbB, PsbC, PsbD, PsbE, PsbF, PsbH, PsbI, PsbJ, PsbK, PsbL, PsbM, PsbT, PsbX, PsbY, PsbZ, Psb30/Ycf12, peripheral proteins PsbO, CyanoQ (PsbQ), PsbU, PsbV and a large number of cofactors. It forms dimeric complexes.

The protein localises to the cellular thylakoid membrane. Found at the monomer-monomer interface of the photosystem II (PS II) dimer, plays a role in assembly and dimerization of PSII. PSII is a light-driven water plastoquinone oxidoreductase, using light energy to abstract electrons from H(2)O, generating a proton gradient subsequently used for ATP formation. The protein is Photosystem II reaction center protein T of Synechococcus sp. (strain RCC307).